The sequence spans 145 residues: Hemoglobin subunit beta (145 aa).

The Globin domain maps to 1–145; sequence MLTAEEKAAV…VANALAHRYH (145 aa). Position 11 is a phosphothreonine (Thr11). The residue at position 58 (Lys58) is an N6-acetyllysine. His62 contacts heme b. Position 81 is an N6-acetyllysine (Lys81). His91 contributes to the heme b binding site. Cys92 is subject to S-nitrosocysteine.

The protein belongs to the globin family. As to quaternary structure, heterotetramer of two alpha chains and two beta chains. In terms of tissue distribution, red blood cells.

Functionally, involved in oxygen transport from the lung to the various peripheral tissues. The polypeptide is Hemoglobin subunit beta (HBB) (Ovis aries musimon (Mouflon)).